Reading from the N-terminus, the 434-residue chain is Methylenetetrahydrofolate--tRNA-(uracil-5-)-methyltransferase TrmFO (434 aa).

9–14 contributes to the FAD binding site; it reads GAGLAG.

The protein belongs to the MnmG family. TrmFO subfamily. FAD serves as cofactor.

It is found in the cytoplasm. The catalysed reaction is uridine(54) in tRNA + (6R)-5,10-methylene-5,6,7,8-tetrahydrofolate + NADH + H(+) = 5-methyluridine(54) in tRNA + (6S)-5,6,7,8-tetrahydrofolate + NAD(+). The enzyme catalyses uridine(54) in tRNA + (6R)-5,10-methylene-5,6,7,8-tetrahydrofolate + NADPH + H(+) = 5-methyluridine(54) in tRNA + (6S)-5,6,7,8-tetrahydrofolate + NADP(+). Its function is as follows. Catalyzes the folate-dependent formation of 5-methyl-uridine at position 54 (M-5-U54) in all tRNAs. The protein is Methylenetetrahydrofolate--tRNA-(uracil-5-)-methyltransferase TrmFO of Listeria monocytogenes serovar 1/2a (strain ATCC BAA-679 / EGD-e).